The sequence spans 123 residues: Large ribosomal subunit protein uL14 (123 aa).

Belongs to the universal ribosomal protein uL14 family. As to quaternary structure, part of the 50S ribosomal subunit. Forms a cluster with proteins L3 and L19. In the 70S ribosome, L14 and L19 interact and together make contacts with the 16S rRNA in bridges B5 and B8.

Functionally, binds to 23S rRNA. Forms part of two intersubunit bridges in the 70S ribosome. The chain is Large ribosomal subunit protein uL14 from Actinobacillus succinogenes (strain ATCC 55618 / DSM 22257 / CCUG 43843 / 130Z).